Here is an 816-residue protein sequence, read N- to C-terminus: H(+)/Cl(-) exchange transporter 5 (816 aa).

The Cytoplasmic segment spans residues 1 to 124; the sequence is MAMWQGAMDN…WALIHSVSDA (124 aa). Transmembrane regions (helical) follow at residues 125-162 and 208-231; these read FSGW…ICTG and VNYF…VKAF. Positions 237-241 match the Selectivity filter part_1 motif; sequence GSGIP. S238 lines the chloride pocket. Positions 240 to 247 form an intramembrane region, helical; it reads IPEIKTIL. 2 consecutive transmembrane segments (helical) span residues 256 to 275 and 281 to 300; these read LGKW…VSSG and EGPL…HCFN. The short motif at 279 to 283 is the Selectivity filter part_2 element; it reads GKEGP. 2 consecutive intramembrane regions (helical) follow at residues 312–324 and 328–336; these read VLSA…VSVA and PIGGVLFSL. 5 helical membrane passes run 348–366, 389–414, 422–442, 498–518, and 523–542; these read LWRS…RSIN, LVPF…IAWC, LGKY…ILAF, MWQL…TFGM, and GLFI…LGVG. The short motif at 523–527 is the Selectivity filter part_3 element; the sequence is GLFIP. F525 serves as a coordination point for chloride. Residues 570–584 constitute an intramembrane region (helical); it reads GLYAMVGAAACLGGV. Positions 585–587 form an intramembrane region, note=Loop between two helices; sequence TRM. An intramembrane region (helical) is located at residues 588–599; the sequence is TVSLVVIMFELT. Positions 600-604 form an intramembrane region, note=Loop between two helices; that stretch reads GGLEY. A helical transmembrane segment spans residues 605 to 622; it reads IVPLMAAAMTSKWVADAL. Residues 623-816 are Cytoplasmic-facing; that stretch reads GREGIYDAHI…NQDPESILFN (194 aa). Y628 is a chloride binding site. CBS domains lie at 656–720 and 752–811; these read MKPR…ARKK and ILDL…QDPE. Residues T666, 687 to 689, and 794 to 797 each bind ATP; these read YSG and TKKD.

It belongs to the chloride channel (TC 2.A.49) family. ClC-5/CLCN5 subfamily. Interacts with NEDD4 and NEDD4L. Ubiquitinated by NEDD4L in the presence of albumin; which promotes endocytosis and proteasomal degradation. As to expression, kidney specific.

The protein resides in the golgi apparatus membrane. The protein localises to the endosome membrane. It is found in the cell membrane. The catalysed reaction is 2 chloride(in) + H(+)(out) = 2 chloride(out) + H(+)(in). In terms of biological role, proton-coupled chloride transporter. Functions as antiport system and exchanges chloride ions against protons. Important for normal acidification of the endosome lumen. May play an important role in renal tubular function. The CLC channel family contains both chloride channels and proton-coupled anion transporters that exchange chloride or another anion for protons. The absence of conserved gating glutamate residues is typical for family members that function as channels. The chain is H(+)/Cl(-) exchange transporter 5 (Clcn5) from Rattus norvegicus (Rat).